A 155-amino-acid polypeptide reads, in one-letter code: Ribonuclease H (155 aa).

The region spanning 4-145 is the RNase H type-1 domain; the sequence is QQKVVEIYTD…ADALARKAIT (142 aa). Asp13, Glu51, Asp73, and Asp137 together coordinate Mg(2+).

The protein belongs to the RNase H family. As to quaternary structure, monomer. The cofactor is Mg(2+).

The protein resides in the cytoplasm. It carries out the reaction Endonucleolytic cleavage to 5'-phosphomonoester.. Its function is as follows. Endonuclease that specifically degrades the RNA of RNA-DNA hybrids. This Bartonella quintana (strain Toulouse) (Rochalimaea quintana) protein is Ribonuclease H.